A 185-amino-acid polypeptide reads, in one-letter code: Ribosome-recycling factor (185 aa).

The protein belongs to the RRF family.

The protein resides in the cytoplasm. Functionally, responsible for the release of ribosomes from messenger RNA at the termination of protein biosynthesis. May increase the efficiency of translation by recycling ribosomes from one round of translation to another. This is Ribosome-recycling factor from Shewanella loihica (strain ATCC BAA-1088 / PV-4).